Reading from the N-terminus, the 293-residue chain is N-acetylmannosamine kinase (293 aa).

Residues 5 to 12 (AIDIGGTK) and 133 to 140 (GVGGGLVI) contribute to the ATP site. Zn(2+) contacts are provided by histidine 157, cysteine 167, cysteine 169, and cysteine 174.

This sequence belongs to the ROK (NagC/XylR) family. NanK subfamily. As to quaternary structure, homodimer.

It carries out the reaction an N-acyl-D-mannosamine + ATP = an N-acyl-D-mannosamine 6-phosphate + ADP + H(+). It functions in the pathway amino-sugar metabolism; N-acetylneuraminate degradation; D-fructose 6-phosphate from N-acetylneuraminate: step 2/5. Functionally, catalyzes the phosphorylation of N-acetylmannosamine (ManNAc) to ManNAc-6-P. The protein is N-acetylmannosamine kinase of Vibrio vulnificus (strain YJ016).